The chain runs to 343 residues: Cilia- and flagella-associated protein 36 (343 aa).

Phosphoserine occurs at positions 85 and 147. Positions Ser-147 to Glu-187 form a coiled coil. The interval Lys-165 to Leu-188 is disordered. Ser-201 bears the Phosphoserine mark. Basic and acidic residues-rich tracts occupy residues Gln-279 to Thr-293 and Gln-301 to Lys-323. The interval Gln-279–Lys-323 is disordered.

It belongs to the CFAP36 family. As to quaternary structure, interacts with ARL3.

It localises to the nucleus. It is found in the cytoplasm. The protein localises to the cell projection. The protein resides in the cilium. Its subcellular location is the flagellum. In terms of biological role, may act as an effector for ARL3. The protein is Cilia- and flagella-associated protein 36 of Mus musculus (Mouse).